Consider the following 306-residue polypeptide: WUSCHEL-related homeobox 13 (306 aa).

The segment covering 1-11 (MMALGVPPPPS) has biased composition (pro residues). Disordered regions lie at residues 1–20 (MMALGVPPPPSRAYVSGPLR), 103–142 (PRSHGHRTGGGGFSLKSSPFSSVGEERVPDPKPRRNPRPE), and 190–276 (SRSK…ARAT). A compositionally biased stretch (basic and acidic residues) spans 126–142 (GEERVPDPKPRRNPRPE). A DNA-binding region (homeobox; WUS-type) is located at residues 132-196 (DPKPRRNPRP…NRKSRSKNKL (65 aa)). The span at 199 to 210 (GGTGRAGLGLGG) shows a compositional bias: gly residues. Residues 231-242 (FTPPPILPPQPV) are compositionally biased toward pro residues. A compositionally biased stretch (low complexity) spans 243-270 (QPQQQLVSPVAAPTSLSSSSSDRSSGSS).

Belongs to the WUS homeobox family.

It is found in the nucleus. In terms of biological role, transcription factor which may be involved in developmental processes. In Oryza sativa subsp. japonica (Rice), this protein is WUSCHEL-related homeobox 13 (WOX13).